Reading from the N-terminus, the 101-residue chain is NADH-quinone oxidoreductase subunit K (101 aa).

The next 3 membrane-spanning stretches (helical) occupy residues 5–25 (LGQVLMLAGLLFVAGLVGVLL), 29–49 (LIMILIGVEIMLNAVGLVLVG), and 62–82 (VALLLMAVAAAEVTIALALVV).

This sequence belongs to the complex I subunit 4L family. As to quaternary structure, NDH-1 is composed of 14 different subunits. Subunits NuoA, H, J, K, L, M, N constitute the membrane sector of the complex.

It is found in the cell inner membrane. It catalyses the reaction a quinone + NADH + 5 H(+)(in) = a quinol + NAD(+) + 4 H(+)(out). NDH-1 shuttles electrons from NADH, via FMN and iron-sulfur (Fe-S) centers, to quinones in the respiratory chain. The immediate electron acceptor for the enzyme in this species is believed to be ubiquinone. Couples the redox reaction to proton translocation (for every two electrons transferred, four hydrogen ions are translocated across the cytoplasmic membrane), and thus conserves the redox energy in a proton gradient. The sequence is that of NADH-quinone oxidoreductase subunit K from Syntrophotalea carbinolica (strain DSM 2380 / NBRC 103641 / GraBd1) (Pelobacter carbinolicus).